A 636-amino-acid polypeptide reads, in one-letter code: NADP-dependent malic enzyme, chloroplastic (636 aa).

The interval 1–28 (MLSTRTAAVAASASPASPWKLGGRSEGG) is disordered. The transit peptide at 1 to 62 (MLSTRTAAVA…LPPRRVDAVA (62 aa)) directs the protein to the chloroplast. The segment covering 7–18 (AAVAASASPASP) has biased composition (low complexity). Tyr184 (proton donor) is an active-site residue. Arg237 is an NAD(+) binding site. The Proton acceptor role is filled by Lys255. A divalent metal cation-binding residues include Glu327, Asp328, and Asp351. Asp351 provides a ligand contact to NAD(+). Residue 380–396 (LFLGAGEAGTGIAELIA) coordinates NADP(+). An NAD(+)-binding site is contributed by Asn492.

It belongs to the malic enzymes family. Homotetramer. Requires Mg(2+) as cofactor. Mn(2+) serves as cofactor.

It is found in the plastid. The protein localises to the chloroplast. The enzyme catalyses (S)-malate + NADP(+) = pyruvate + CO2 + NADPH. It carries out the reaction oxaloacetate + H(+) = pyruvate + CO2. The protein operates within photosynthesis; C4 acid pathway. The chloroplastic ME isoform decarboxylates malate shuttled from neighboring mesophyll cells. The CO(2) released is then refixed by ribulose-bisphosphate carboxylase. This pathway eliminates the photorespiratory loss of CO(2) that occurs in most plants. The protein is NADP-dependent malic enzyme, chloroplastic (MOD1) of Zea mays (Maize).